Reading from the N-terminus, the 183-residue chain is Dual-action ribosomal maturation protein DarP (183 aa).

A disordered region spans residues 1-23 (MTKQPDDWLDEVPDNENDDDDDE). Over residues 7-23 (DWLDEVPDNENDDDDDE) the composition is skewed to acidic residues.

Belongs to the DarP family.

The protein localises to the cytoplasm. Its function is as follows. Member of a network of 50S ribosomal subunit biogenesis factors which assembles along the 30S-50S interface, preventing incorrect 23S rRNA structures from forming. Promotes peptidyl transferase center (PTC) maturation. The chain is Dual-action ribosomal maturation protein DarP from Cronobacter sakazakii (strain ATCC BAA-894) (Enterobacter sakazakii).